Consider the following 106-residue polypeptide: UPF0145 protein Tpet_0165 (106 aa).

Belongs to the UPF0145 family.

The polypeptide is UPF0145 protein Tpet_0165 (Thermotoga petrophila (strain ATCC BAA-488 / DSM 13995 / JCM 10881 / RKU-1)).